The chain runs to 693 residues: Glycine--tRNA ligase beta subunit (693 aa).

Residues 65–74 show a composition bias toward basic and acidic residues; it reads QPDKSVEKRG. Residues 65-84 form a disordered region; it reads QPDKSVEKRGPAVKAAFDDS.

Belongs to the class-II aminoacyl-tRNA synthetase family. As to quaternary structure, tetramer of two alpha and two beta subunits.

Its subcellular location is the cytoplasm. The catalysed reaction is tRNA(Gly) + glycine + ATP = glycyl-tRNA(Gly) + AMP + diphosphate. The polypeptide is Glycine--tRNA ligase beta subunit (Marinobacter nauticus (strain ATCC 700491 / DSM 11845 / VT8) (Marinobacter aquaeolei)).